We begin with the raw amino-acid sequence, 608 residues long: Phosphomethylpyrimidine synthase (608 aa).

Substrate contacts are provided by residues N216, M245, Y274, H310, 330–332, 371–374, and E410; these read SRG and DGLR. A Zn(2+)-binding site is contributed by H414. Y437 contributes to the substrate binding site. H478 is a Zn(2+) binding site. [4Fe-4S] cluster is bound by residues C558, C561, and C566.

It belongs to the ThiC family. In terms of assembly, homodimer. The cofactor is [4Fe-4S] cluster.

It carries out the reaction 5-amino-1-(5-phospho-beta-D-ribosyl)imidazole + S-adenosyl-L-methionine = 4-amino-2-methyl-5-(phosphooxymethyl)pyrimidine + CO + 5'-deoxyadenosine + formate + L-methionine + 3 H(+). The protein operates within cofactor biosynthesis; thiamine diphosphate biosynthesis. Its function is as follows. Catalyzes the synthesis of the hydroxymethylpyrimidine phosphate (HMP-P) moiety of thiamine from aminoimidazole ribotide (AIR) in a radical S-adenosyl-L-methionine (SAM)-dependent reaction. The polypeptide is Phosphomethylpyrimidine synthase (Ruegeria sp. (strain TM1040) (Silicibacter sp.)).